Consider the following 359-residue polypeptide: Transaldolase (359 aa).

Residue Lys-139 is the Schiff-base intermediate with substrate of the active site.

The protein belongs to the transaldolase family. Type 2 subfamily.

It localises to the cytoplasm. It catalyses the reaction D-sedoheptulose 7-phosphate + D-glyceraldehyde 3-phosphate = D-erythrose 4-phosphate + beta-D-fructose 6-phosphate. The protein operates within carbohydrate degradation; pentose phosphate pathway; D-glyceraldehyde 3-phosphate and beta-D-fructose 6-phosphate from D-ribose 5-phosphate and D-xylulose 5-phosphate (non-oxidative stage): step 2/3. Its function is as follows. Transaldolase is important for the balance of metabolites in the pentose-phosphate pathway. The polypeptide is Transaldolase (Thiobacillus denitrificans (strain ATCC 25259 / T1)).